Here is a 22-residue protein sequence, read N- to C-terminus: Chitin-binding protein 3 (22 aa).

Post-translationally, glycosylated; contains 2.5% carbohydrates.

Its function is as follows. Chitin-binding protein. Has antifungal activity against F.solani, F.oxysporum, C.musae and C.gloesporoides but not against P.oligandrum. Depending on concentration the antifungal activity can be fungistatic or fungicidal. Inhibits both spore germination and mycelial growth in F.solani at a concentration of 0.1 mg/ml. Has antifungal activity against C.krusei, C.albicans, C.tropicalis and C.parapsilosis. Has no chitinase, beta-glucanase or hemagglutinating activity. Acts as a flocculent. The chain is Chitin-binding protein 3 from Moringa oleifera (Horseradish tree).